Consider the following 561-residue polypeptide: Arginine--tRNA ligase (561 aa).

The 'HIGH' region motif lies at 136–146 (ANPTGLLHMGN).

Belongs to the class-I aminoacyl-tRNA synthetase family. In terms of assembly, monomer.

It is found in the cytoplasm. It catalyses the reaction tRNA(Arg) + L-arginine + ATP = L-arginyl-tRNA(Arg) + AMP + diphosphate. The polypeptide is Arginine--tRNA ligase (Desulforamulus reducens (strain ATCC BAA-1160 / DSM 100696 / MI-1) (Desulfotomaculum reducens)).